The primary structure comprises 317 residues: Transaldolase (317 aa).

The Schiff-base intermediate with substrate role is filled by Lys132.

It belongs to the transaldolase family. Type 1 subfamily. In terms of assembly, homodimer.

It localises to the cytoplasm. The catalysed reaction is D-sedoheptulose 7-phosphate + D-glyceraldehyde 3-phosphate = D-erythrose 4-phosphate + beta-D-fructose 6-phosphate. It participates in carbohydrate degradation; pentose phosphate pathway; D-glyceraldehyde 3-phosphate and beta-D-fructose 6-phosphate from D-ribose 5-phosphate and D-xylulose 5-phosphate (non-oxidative stage): step 2/3. In terms of biological role, transaldolase is important for the balance of metabolites in the pentose-phosphate pathway. The polypeptide is Transaldolase (Histophilus somni (strain 129Pt) (Haemophilus somnus)).